The sequence spans 159 residues: Transcription elongation factor GreA (159 aa).

Residues 3–37 are a coiled coil; the sequence is TNKEVVLTYEGLQKLEQELENLKTVKRREVAERIK.

This sequence belongs to the GreA/GreB family.

Functionally, necessary for efficient RNA polymerase transcription elongation past template-encoded arresting sites. The arresting sites in DNA have the property of trapping a certain fraction of elongating RNA polymerases that pass through, resulting in locked ternary complexes. Cleavage of the nascent transcript by cleavage factors such as GreA or GreB allows the resumption of elongation from the new 3'terminus. GreA releases sequences of 2 to 3 nucleotides. The protein is Transcription elongation factor GreA of Acetivibrio thermocellus (strain ATCC 27405 / DSM 1237 / JCM 9322 / NBRC 103400 / NCIMB 10682 / NRRL B-4536 / VPI 7372) (Clostridium thermocellum).